Reading from the N-terminus, the 400-residue chain is Phosphoglycerate kinase (400 aa).

Substrate-binding positions include aspartate 21–asparagine 23, arginine 36, histidine 59–arginine 62, arginine 118, and arginine 151. Residues lysine 201, glutamate 323, and glycine 353–threonine 356 each bind ATP.

It belongs to the phosphoglycerate kinase family. As to quaternary structure, monomer.

It is found in the cytoplasm. The catalysed reaction is (2R)-3-phosphoglycerate + ATP = (2R)-3-phospho-glyceroyl phosphate + ADP. It functions in the pathway carbohydrate degradation; glycolysis; pyruvate from D-glyceraldehyde 3-phosphate: step 2/5. The polypeptide is Phosphoglycerate kinase (Bartonella bacilliformis (strain ATCC 35685 / KC583 / Herrer 020/F12,63)).